A 347-amino-acid polypeptide reads, in one-letter code: Farnesyl pyrophosphate synthase ERG20 (347 aa).

Isopentenyl diphosphate-binding residues include Lys50, Arg53, and Gln88. Residues Asp95 and Asp99 each contribute to the Mg(2+) site. Position 104 (Arg104) interacts with dimethylallyl diphosphate. Position 105 (Arg105) interacts with isopentenyl diphosphate. Dimethylallyl diphosphate contacts are provided by Lys192, Thr193, Gln232, Lys249, and Lys258.

This sequence belongs to the FPP/GGPP synthase family. The cofactor is Mg(2+).

It catalyses the reaction isopentenyl diphosphate + dimethylallyl diphosphate = (2E)-geranyl diphosphate + diphosphate. The catalysed reaction is isopentenyl diphosphate + (2E)-geranyl diphosphate = (2E,6E)-farnesyl diphosphate + diphosphate. The protein operates within isoprenoid biosynthesis; farnesyl diphosphate biosynthesis; farnesyl diphosphate from geranyl diphosphate and isopentenyl diphosphate: step 1/1. It functions in the pathway isoprenoid biosynthesis; geranyl diphosphate biosynthesis; geranyl diphosphate from dimethylallyl diphosphate and isopentenyl diphosphate: step 1/1. Functionally, farnesyl pyrophosphate synthase; part of the second module of ergosterol biosynthesis pathway that includes the middle steps of the pathway. ERG20 catalyzes the sequential condensation of isopentenyl pyrophosphate with dimethylallyl pyrophosphate, and then with the resultant geranylpyrophosphate to the ultimate product farnesyl pyrophosphate. The second module is carried out in the vacuole and involves the formation of farnesyl diphosphate, which is also an important intermediate in the biosynthesis of ubiquinone, dolichol, heme and prenylated proteins. Activity by the mevalonate kinase ERG12 (FG05912) first converts mevalonate into 5-phosphomevalonate. 5-phosphomevalonate is then further converted to 5-diphosphomevalonate by the phosphomevalonate kinase ERG8 (FG09764). The diphosphomevalonate decarboxylase ERG19 (FG10424) then produces isopentenyl diphosphate. The isopentenyl-diphosphate delta-isomerase IDI1 (FG09722) then catalyzes the 1,3-allylic rearrangement of the homoallylic substrate isopentenyl (IPP) to its highly electrophilic allylic isomer, dimethylallyl diphosphate (DMAPP). Finally the farnesyl diphosphate synthase ERG20 (FG06784) catalyzes the sequential condensation of isopentenyl pyrophosphate with dimethylallyl pyrophosphate, and then with the resultant geranylpyrophosphate to the ultimate product farnesyl pyrophosphate. The chain is Farnesyl pyrophosphate synthase ERG20 from Gibberella zeae (strain ATCC MYA-4620 / CBS 123657 / FGSC 9075 / NRRL 31084 / PH-1) (Wheat head blight fungus).